A 126-amino-acid chain; its full sequence is MAVPNELKYSKEHEWVKVEGNVAIIGITEYAQSELGDIVFVELPETDDEINEGDTFGSVESVKTVSELYAPISGKVVEVNEELEDSPEFVNESPYEKAWMVKVEISDESQIEALLTAEKYSEMIGE.

A Lipoyl-binding domain is found at 22–104 (VAIIGITEYA…YEKAWMVKVE (83 aa)). K63 is modified (N6-lipoyllysine).

Belongs to the GcvH family. The glycine cleavage system is composed of four proteins: P, T, L and H. (R)-lipoate serves as cofactor.

The glycine cleavage system catalyzes the degradation of glycine. The H protein shuttles the methylamine group of glycine from the P protein to the T protein. Functionally, is also involved in protein lipoylation via its role as an octanoyl/lipoyl carrier protein intermediate. The chain is Glycine cleavage system H protein from Staphylococcus aureus (strain USA300).